The chain runs to 206 residues: Large ribosomal subunit protein uL4 (206 aa).

Residues 47–94 (NRAQKGRAEVSKSTRKPWRQKGTGRARAGMASSPLWRGGGRVFPNSPE) form a disordered region. The segment covering 59 to 70 (STRKPWRQKGTG) has biased composition (basic residues).

The protein belongs to the universal ribosomal protein uL4 family. As to quaternary structure, part of the 50S ribosomal subunit.

In terms of biological role, one of the primary rRNA binding proteins, this protein initially binds near the 5'-end of the 23S rRNA. It is important during the early stages of 50S assembly. It makes multiple contacts with different domains of the 23S rRNA in the assembled 50S subunit and ribosome. Forms part of the polypeptide exit tunnel. This Aromatoleum aromaticum (strain DSM 19018 / LMG 30748 / EbN1) (Azoarcus sp. (strain EbN1)) protein is Large ribosomal subunit protein uL4.